The primary structure comprises 165 residues: Polcalcin Cup a 4 (165 aa).

EF-hand domains lie at 22 to 57 (QSVH…MGSE), 58 to 86 (VDEA…FVDL), 91 to 126 (ATVK…VGEP), and 127 to 162 (CTIE…EMTD). 19 residues coordinate Ca(2+): Asp35, Asn37, Asp39, Lys41, Glu46, Asp71, Asp73, Asp75, Tyr77, Glu82, Asp104, Asp106, Asn108, Thr110, Glu115, Asp140, Asn142, Asp144, and Glu151.

In terms of assembly, may exist as monomer and dimer. In terms of tissue distribution, expressed in mature pollen grains.

This Hesperocyparis arizonica (Arizona cypress) protein is Polcalcin Cup a 4.